Consider the following 371-residue polypeptide: Anhydro-N-acetylmuramic acid kinase (371 aa).

12–20 (GTVLDGNID) serves as a coordination point for ATP.

Belongs to the anhydro-N-acetylmuramic acid kinase family.

The catalysed reaction is 1,6-anhydro-N-acetyl-beta-muramate + ATP + H2O = N-acetyl-D-muramate 6-phosphate + ADP + H(+). The protein operates within amino-sugar metabolism; 1,6-anhydro-N-acetylmuramate degradation. It functions in the pathway cell wall biogenesis; peptidoglycan recycling. Catalyzes the specific phosphorylation of 1,6-anhydro-N-acetylmuramic acid (anhMurNAc) with the simultaneous cleavage of the 1,6-anhydro ring, generating MurNAc-6-P. Is required for the utilization of anhMurNAc either imported from the medium or derived from its own cell wall murein, and thus plays a role in cell wall recycling. The chain is Anhydro-N-acetylmuramic acid kinase from Mesorhizobium japonicum (strain LMG 29417 / CECT 9101 / MAFF 303099) (Mesorhizobium loti (strain MAFF 303099)).